A 700-amino-acid chain; its full sequence is Elongation factor G (700 aa).

The region spanning 10–286 (NKVRNIGIMA…AVIDYLPNPL (277 aa)) is the tr-type G domain. Residues 19–26 (AHIDAGKT), 83–87 (DTPGH), and 137–140 (NKMD) contribute to the GTP site.

The protein belongs to the TRAFAC class translation factor GTPase superfamily. Classic translation factor GTPase family. EF-G/EF-2 subfamily.

Its subcellular location is the cytoplasm. Functionally, catalyzes the GTP-dependent ribosomal translocation step during translation elongation. During this step, the ribosome changes from the pre-translocational (PRE) to the post-translocational (POST) state as the newly formed A-site-bound peptidyl-tRNA and P-site-bound deacylated tRNA move to the P and E sites, respectively. Catalyzes the coordinated movement of the two tRNA molecules, the mRNA and conformational changes in the ribosome. This chain is Elongation factor G, found in Rhodococcus opacus (strain B4).